We begin with the raw amino-acid sequence, 309 residues long: Protein FdhE homolog (309 aa).

It belongs to the FdhE family.

It is found in the cytoplasm. In terms of biological role, necessary for formate dehydrogenase activity. The chain is Protein FdhE homolog from Pseudomonas aeruginosa (strain ATCC 15692 / DSM 22644 / CIP 104116 / JCM 14847 / LMG 12228 / 1C / PRS 101 / PAO1).